Consider the following 230-residue polypeptide: Cell division ATP-binding protein FtsE (230 aa).

In terms of domain architecture, ABC transporter spans 4–229; the sequence is IEMRDVVKKY…DESKGEYGYD (226 aa). 37-44 is a binding site for ATP; that stretch reads GPSGAGKS.

Belongs to the ABC transporter superfamily. In terms of assembly, homodimer. Interacts with FtsX; forms a membrane-associated complex. Interacts with pcsB.

It is found in the cell membrane. It carries out the reaction ATP + H2O = ADP + phosphate + H(+). In terms of biological role, part of the ABC transporter FtsEX involved in cellular division. Has ATPase activity. Essential for cell division and viability. This Streptococcus pneumoniae serotype 2 (strain D39 / NCTC 7466) protein is Cell division ATP-binding protein FtsE.